Consider the following 386-residue polypeptide: Cell division protein FtsZ (386 aa).

GTP is bound by residues 21 to 25 (GGGGN), 108 to 110 (GTG), E139, R143, and N187.

It belongs to the FtsZ family. Homodimer. Polymerizes to form a dynamic ring structure in a strictly GTP-dependent manner. Interacts directly with several other division proteins.

It localises to the cytoplasm. Its function is as follows. Essential cell division protein that forms a contractile ring structure (Z ring) at the future cell division site. The regulation of the ring assembly controls the timing and the location of cell division. One of the functions of the FtsZ ring is to recruit other cell division proteins to the septum to produce a new cell wall between the dividing cells. Binds GTP and shows GTPase activity. In Coxiella burnetii (strain RSA 493 / Nine Mile phase I), this protein is Cell division protein FtsZ.